The sequence spans 363 residues: Type 3 secretion system translocon protein SctB (363 aa).

Residues 99 to 120 form a helical membrane-spanning segment; it reads ISSLSSNAVSLIISVAVLLSAL.

It belongs to the SctB/SipC family. The core secretion machinery of the T3SS is composed of approximately 20 different proteins, including cytoplasmic components, a base, an export apparatus and a needle. This subunit is involved in the formation of a pore, called the translocon, in host membrane.

It is found in the secreted. Its subcellular location is the host membrane. In terms of biological role, component of the type III secretion system (T3SS), also called injectisome, which is used to inject bacterial effector proteins into eukaryotic host cells. IpaB/SctE and IpaC/SctB are inserted into the host membrane where they form a pore and allow the translocation of effector proteins into the cytosol of target cells. This chain is Type 3 secretion system translocon protein SctB, found in Shigella dysenteriae.